Here is a 446-residue protein sequence, read N- to C-terminus: N-succinylarginine dihydrolase (446 aa).

Residues 19 to 28 (AGLSFGNVAS), N110, and 137 to 138 (HR) each bind substrate. The active site involves E174. R213 contacts substrate. Residue H249 is part of the active site. D251 and N364 together coordinate substrate. The active-site Nucleophile is C370.

This sequence belongs to the succinylarginine dihydrolase family. Homodimer.

The enzyme catalyses N(2)-succinyl-L-arginine + 2 H2O + 2 H(+) = N(2)-succinyl-L-ornithine + 2 NH4(+) + CO2. Its pathway is amino-acid degradation; L-arginine degradation via AST pathway; L-glutamate and succinate from L-arginine: step 2/5. In terms of biological role, catalyzes the hydrolysis of N(2)-succinylarginine into N(2)-succinylornithine, ammonia and CO(2). This Burkholderia multivorans (strain ATCC 17616 / 249) protein is N-succinylarginine dihydrolase.